The sequence spans 525 residues: Sterol O-acyltransferase 2 (525 aa).

2 disordered regions span residues 1–34 (MQPK…THGT) and 77–97 (QDRP…ELHP). Topologically, residues 1–119 (MQPKVPQLRR…IDELMEVQHF (119 aa)) are cytoplasmic. Over residues 9–23 (RRREGLGEEQEKGAR) the composition is skewed to basic and acidic residues. Histidine 118 provides a ligand contact to cholesterol. Residues 120 to 141 (RTIYHMFIAGLCVLIISTLAID) form a helical membrane-spanning segment. Residues 142–161 (FIDEGRLMLEFDLLLFSFGQ) lie on the Lumenal side of the membrane. Residues 162-187 (LPLALMTWVPMFLSTLLVPYQTLWLW) traverse the membrane as a helical segment. At 188 to 199 (ARPRAGGAWMLG) the chain is on the cytoplasmic side. Residues 200-223 (ASLGCVLLAAHAVVLCVLPVHVSV) form a helical membrane-spanning segment. Residues 224–231 (RHELPPAS) are Lumenal-facing. The chain crosses the membrane as a helical span at residues 232–255 (RCVLVFEQVRLLMKSYSFLRETVP). The Cytoplasmic portion of the chain corresponds to 256–296 (GIFCVRGGKGISPPSFSSYLYFLFCPTLIYRETYPRTPSIR). Cysteine 280 is modified (cysteine sulfenic acid (-SOH); alternate). A Glycyl cysteine thioester (Cys-Gly) (interchain with G-Cter in ubiquitin); alternate cross-link involves residue cysteine 280. The chain crosses the membrane as a helical span at residues 297-329 (WNYVAKNFAQVLGCLLYACFILGRLCVPVFANM). The Lumenal segment spans residues 330 to 346 (SREPFSTRALLLSILHA). The helical transmembrane segment at 347 to 372 (TGPGIFMLLLIFFAFLHCWLNAFAEM) threads the bilayer. Over 373 to 420 (LRFGDRMFYRDWWNSTSFSNYYRTWNVVVHDWLYSYVYQDGLWLLGRR) the chain is Cytoplasmic. Positions 380-386 (FYRDWWN) match the FYXDWWN motif motif. An acyl-CoA contacts are provided by asparagine 392, arginine 395, asparagine 398, histidine 402, tyrosine 410, and serine 433. A helical transmembrane segment spans residues 421 to 445 (ARGVAMLGVFLVSAVVHEYIFCFVL). Histidine 437 is an active-site residue. Residues 446 to 451 (GFFYPV) are Lumenal-facing. A helical transmembrane segment spans residues 452 to 467 (MLMLFLVFGGLLNFTM). Over 468–473 (NDRHTG) the chain is Cytoplasmic. Residues 474–505 (PAWNILMWTFLFMGQGIQVSLYCQEWYARRHC) traverse the membrane as a helical segment. Over 506–525 (PLPQTTFWGMVTPRSWSCHP) the chain is Lumenal.

It belongs to the membrane-bound acyltransferase family. Sterol o-acyltransferase subfamily. In terms of assembly, may form homo- or heterodimers. Interacts with INSIG1; the interaction is direct and promotes association with AMFR/gp78. Polyubiquitinated by AMFR/gp78 at Cys-280, leading to its degradation when the lipid levels are low. Association with AMFR/gp78 is mediated via interaction with INSIG1. High concentration of cholesterol and fatty acid results in Cys-280 oxidation, preventing ubiquitination at the same site, resulting in protein stabilization. Post-translationally, oxidized at Cys-280: high concentration of cholesterol and fatty acid induce reactive oxygen species, which oxidizes Cys-280, preventing ubiquitination at the same site, and resulting in protein stabilization.

It is found in the endoplasmic reticulum membrane. It carries out the reaction a sterol + a long-chain fatty acyl-CoA = a long-chain 3-hydroxysterol ester + CoA. The catalysed reaction is cholesterol + an acyl-CoA = a cholesterol ester + CoA. It catalyses the reaction cholesterol + (9Z)-octadecenoyl-CoA = cholesteryl (9Z-octadecenoate) + CoA. The enzyme catalyses (5Z,8Z,11Z,14Z,17Z)-eicosapentaenoyl-CoA + cholesterol = (5Z,8Z,11Z,14Z,17Z-eicosapentaenoyl)-cholesterol + CoA. It carries out the reaction (9Z,12Z,15Z)-octadecatrienoyl-CoA + cholesterol = (9Z,12Z,15Z-octadecatrienoyl)-cholesterol + CoA. The catalysed reaction is (5Z,8Z,11Z,14Z)-eicosatetraenoyl-CoA + cholesterol = cholesteryl (5Z,8Z,11Z,14Z)-eicosatetraenoate + CoA. Its function is as follows. Catalyzes the formation of fatty acid-cholesterol esters, which are less soluble in membranes than cholesterol. Plays a role in lipoprotein assembly and dietary cholesterol absorption. Utilizes oleoyl-CoA ((9Z)-octadecenoyl-CoA) and linolenoyl-CoA ((9Z,12Z,15Z)-octadecatrienoyl-CoA) as substrates. May provide cholesteryl esters for lipoprotein secretion from hepatocytes and intestinal mucosa. The protein is Sterol O-acyltransferase 2 of Mus musculus (Mouse).